The following is a 243-amino-acid chain: Pyridoxine 5'-phosphate synthase (243 aa).

N6 contributes to the 3-amino-2-oxopropyl phosphate binding site. Position 8–9 (8–9 (DH)) interacts with 1-deoxy-D-xylulose 5-phosphate. Residue R17 coordinates 3-amino-2-oxopropyl phosphate. H42 acts as the Proton acceptor in catalysis. Positions 44 and 49 each coordinate 1-deoxy-D-xylulose 5-phosphate. E72 (proton acceptor) is an active-site residue. 1-deoxy-D-xylulose 5-phosphate is bound at residue T102. H192 serves as the catalytic Proton donor. Residues G193 and 214–215 (GH) contribute to the 3-amino-2-oxopropyl phosphate site.

The protein belongs to the PNP synthase family. In terms of assembly, homooctamer; tetramer of dimers.

It is found in the cytoplasm. The catalysed reaction is 3-amino-2-oxopropyl phosphate + 1-deoxy-D-xylulose 5-phosphate = pyridoxine 5'-phosphate + phosphate + 2 H2O + H(+). Its pathway is cofactor biosynthesis; pyridoxine 5'-phosphate biosynthesis; pyridoxine 5'-phosphate from D-erythrose 4-phosphate: step 5/5. Catalyzes the complicated ring closure reaction between the two acyclic compounds 1-deoxy-D-xylulose-5-phosphate (DXP) and 3-amino-2-oxopropyl phosphate (1-amino-acetone-3-phosphate or AAP) to form pyridoxine 5'-phosphate (PNP) and inorganic phosphate. The sequence is that of Pyridoxine 5'-phosphate synthase from Sulfurihydrogenibium sp. (strain YO3AOP1).